A 220-amino-acid chain; its full sequence is MALNGFLEFFQKGKTFRPKKPFASGTIRYSLHKQAQASLQSGINLRQVVRLPQGENLNDWLAVHVVDFFNRINLIYGTVSEFCNETTCPTMSGGSRYEYLWADGDLYKKPTALSAQKYIEHLMDWIETQINNEAVFPVSTDVPFPKNFIAISRKILTRLFRVFVHVYIHHFDRIVSIGAEAHVNACYKHFYYFVQEFDMISAKELEPLQEMTSRICKDKD.

The Zn(2+) site is built by cysteine 83, cysteine 88, histidine 165, and histidine 170.

The protein belongs to the MOB1/phocein family.

In Drosophila melanogaster (Fruit fly), this protein is MOB kinase activator-like 3 (Mob3).